A 145-amino-acid polypeptide reads, in one-letter code: Large ribosomal subunit protein uL15 (145 aa).

A disordered region spans residues 1–50 (MRLNTLSPAAGSKPEKQRRGRGIGSGLGKTGGRGVKGQTSRSGGGKVRAG). A compositionally biased stretch (gly residues) spans 22 to 35 (GIGSGLGKTGGRGV).

Belongs to the universal ribosomal protein uL15 family. In terms of assembly, part of the 50S ribosomal subunit.

Functionally, binds to the 23S rRNA. In Aeromonas salmonicida (strain A449), this protein is Large ribosomal subunit protein uL15.